Reading from the N-terminus, the 1225-residue chain is Clustered mitochondria protein homolog (1225 aa).

The interval 1 to 22 (MAQTNGEMEHSKESPEQITNGN) is disordered. A Clu domain is found at 281-532 (QESNNQKDLL…RVTPLDVAWN (252 aa)). 2 disordered regions span residues 577 to 605 (EEAAKKEKSSEDTESKEEGSEEKSEEALD) and 846 to 878 (ANGVNGTGQDEGSKKKKKNKNGDSGSPARSAAA). TPR repeat units follow at residues 949 to 982 (AKLYHQLSMLYYQTDEKDAAVELARKAVIVTERT), 991 to 1024 (ILSYLNLSLFEHASGNTKVALAYIKHAMDLWKII), and 1033 to 1066 (ITTMNNAAVMLQHLKQYSDSRKWFEASLSVCESL). Residues 1153–1184 (RTTLGTQIQPQVGQSTADVSAPSQASNSSIDS) show a composition bias toward polar residues. Positions 1153–1225 (RTTLGTQIQP…KLRGSKKSSA (73 aa)) are disordered.

This sequence belongs to the CLU family. As to quaternary structure, may associate with the eukaryotic translation initiation factor 3 (eIF-3) complex.

The protein resides in the cytoplasm. In terms of biological role, mRNA-binding protein involved in proper cytoplasmic distribution of mitochondria. The chain is Clustered mitochondria protein homolog from Emericella nidulans (strain FGSC A4 / ATCC 38163 / CBS 112.46 / NRRL 194 / M139) (Aspergillus nidulans).